The following is a 212-amino-acid chain: Pyridoxine/pyridoxamine 5'-phosphate oxidase (212 aa).

Residues 61–66 (RTVLLK), 76–77 (FT), Lys82, Lys83, and Gln105 each bind FMN. A substrate-binding site is contributed by Lys66. Substrate contacts are provided by Tyr123, Arg127, and Ser131. FMN-binding positions include 140 to 141 (QS) and Trp185. 191-193 (RLH) contributes to the substrate binding site. Arg195 lines the FMN pocket.

This sequence belongs to the pyridoxamine 5'-phosphate oxidase family. As to quaternary structure, homodimer. Requires FMN as cofactor.

It catalyses the reaction pyridoxamine 5'-phosphate + O2 + H2O = pyridoxal 5'-phosphate + H2O2 + NH4(+). The enzyme catalyses pyridoxine 5'-phosphate + O2 = pyridoxal 5'-phosphate + H2O2. The protein operates within cofactor metabolism; pyridoxal 5'-phosphate salvage; pyridoxal 5'-phosphate from pyridoxamine 5'-phosphate: step 1/1. It functions in the pathway cofactor metabolism; pyridoxal 5'-phosphate salvage; pyridoxal 5'-phosphate from pyridoxine 5'-phosphate: step 1/1. Catalyzes the oxidation of either pyridoxine 5'-phosphate (PNP) or pyridoxamine 5'-phosphate (PMP) into pyridoxal 5'-phosphate (PLP). In Vesicomyosocius okutanii subsp. Calyptogena okutanii (strain HA), this protein is Pyridoxine/pyridoxamine 5'-phosphate oxidase.